The primary structure comprises 376 residues: MSKRDYYEVLGVGRDASEREIKKAYKRLAMKFHPDRNPGDKAAEASFKEAKEAYEILTDTDKKAAYDQFGHAGVDPNRGGGYGGGQGDFGDIFGDVFGDIFGGGRRGGQRQAARGSDLRYNLELSLEEAVKGLTKELRIPTLATCDLCDGSGAKKGTSASTCTTCHGQGQVQMRQGFFTVQQPCPTCHGRGKIIKDPCTKCHGDGRVEKSKTLSVKIPAGVDTGDRIRLAGEGEAGEFGAPPGDLYVQVSVREHAIFVRDGNNLYCEVPISFSKAALGGEIEVPTLDGKVSLKIPAETQTGRMFRLRGKGVKSVRSHAVGDLLCKVVMETPVNLNDRQKELLREFEATLTGESKKHSPKAEGFFDGVKKFFQDLNS.

In terms of domain architecture, J spans 5–70 (DYYEVLGVGR…DKKAAYDQFG (66 aa)). The CR-type zinc-finger motif lies at 132 to 210 (GLTKELRIPT…CHGDGRVEKS (79 aa)). Zn(2+) contacts are provided by Cys-145, Cys-148, Cys-162, Cys-165, Cys-184, Cys-187, Cys-198, and Cys-201. 4 CXXCXGXG motif repeats span residues 145 to 152 (CDLCDGSG), 162 to 169 (CTTCHGQG), 184 to 191 (CPTCHGRG), and 198 to 205 (CTKCHGDG).

This sequence belongs to the DnaJ family. Homodimer. The cofactor is Zn(2+).

The protein localises to the cytoplasm. Its function is as follows. Participates actively in the response to hyperosmotic and heat shock by preventing the aggregation of stress-denatured proteins and by disaggregating proteins, also in an autonomous, DnaK-independent fashion. Unfolded proteins bind initially to DnaJ; upon interaction with the DnaJ-bound protein, DnaK hydrolyzes its bound ATP, resulting in the formation of a stable complex. GrpE releases ADP from DnaK; ATP binding to DnaK triggers the release of the substrate protein, thus completing the reaction cycle. Several rounds of ATP-dependent interactions between DnaJ, DnaK and GrpE are required for fully efficient folding. Also involved, together with DnaK and GrpE, in the DNA replication of plasmids through activation of initiation proteins. The protein is Chaperone protein DnaJ of Shewanella putrefaciens (strain CN-32 / ATCC BAA-453).